An 87-amino-acid polypeptide reads, in one-letter code: MTERNDRKVYTGRVVSDKMDKTITVLVETYKFHKLYGKRVKYSKKFKTHDENNVAKNGDVVRIMETRPLSATKRFRLVEVTEEAVII.

Belongs to the universal ribosomal protein uS17 family. As to quaternary structure, part of the 30S ribosomal subunit.

Its function is as follows. One of the primary rRNA binding proteins, it binds specifically to the 5'-end of 16S ribosomal RNA. The chain is Small ribosomal subunit protein uS17 from Oceanobacillus iheyensis (strain DSM 14371 / CIP 107618 / JCM 11309 / KCTC 3954 / HTE831).